The chain runs to 435 residues: F-box only protein 9 (435 aa).

Residues 1 to 25 (MAEAEEDCHSDAVRVGDEGHESPAE) are disordered. The span at 7 to 25 (DCHSDAVRVGDEGHESPAE) shows a compositional bias: basic and acidic residues. The stretch at 82–115 (ARELFLKAVEEEQNGALYEAIKFYRRAMQLVPDI) is one TPR repeat. Position 124 is a phosphoserine (Ser-124). The 52-residue stretch at 173 to 224 (QTHISVLPMEVLMYIFRWVVSSDLDLRSLEQLSLVCRGFYICARDPEIWRLA) folds into the F-box domain.

Part of the SCF (SKP1-CUL1-F-box) E3 ubiquitin-protein ligase complex SCF(FBXO9) composed of CUL1, SKP1, RBX1 and FBXO9. Interacts with TTI1 and TELO2; when TTI1 and TELO2 are phosphorylated by CK2.

Its subcellular location is the cytoplasm. It functions in the pathway protein modification; protein ubiquitination. Its function is as follows. Substrate recognition component of a SCF (SKP1-CUL1-F-box protein) E3 ubiquitin-protein ligase complex which mediates the ubiquitination and subsequent proteasomal degradation of target proteins and plays a role in several biological processes such as cell cycle, cell proliferation, or maintenance of chromosome stability. Ubiquitinates mTORC1-bound TTI1 and TELO2 when they are phosphorylated by CK2 following growth factor deprivation, leading to their degradation. In contrast, does not mediate ubiquitination of TTI1 and TELO2 when they are part of the mTORC2 complex. As a consequence, mTORC1 is inactivated to restrain cell growth and protein translation, while mTORC2 is the activated due to the relief of feedback inhibition by mTORC1. Plays a role in maintaining epithelial cell survival by regulating the turn-over of chromatin modulator PRMT4 through ubiquitination and degradation by the proteasomal pathway. Also regulates PPARgamma stability by facilitating PPARgamma/PPARG ubiquitination and thereby plays a role in adipocyte differentiation. This Rattus norvegicus (Rat) protein is F-box only protein 9 (Fbxo9).